The chain runs to 161 residues: Vitamin K epoxide reductase complex subunit 1 (161 aa).

Over 1 to 9 the chain is Cytoplasmic; it reads MGTTWRSPG. Residues 10–29 traverse the membrane as a helical segment; sequence RLRLALCLAGLALSLYALHV. Residues 30 to 80 are Lumenal-facing; that stretch reads KAARARNEDYRALCDVGTAISCSRVFSSRWGRGFGLVEHVLGADSILNQSN. A disulfide bridge connects residues cysteine 43 and cysteine 51. Asparagine 80 contacts (S)-warfarin. A helical transmembrane segment spans residues 81–95; sequence SIFGCMFYTIQLLLG. At 96–100 the chain is on the cytoplasmic side; sequence CLRGR. A helical transmembrane segment spans residues 101–128; sequence WASILLILSSLVSVAGSLYLAWILFFVL. The Lumenal portion of the chain corresponds to 129–131; that stretch reads YDF. Cysteine 132 and cysteine 135 are oxidised to a cystine. The helical transmembrane segment at 132 to 153 threads the bilayer; sequence CIVCITTYAINAGLMLLSFQKV. Residues cysteine 135 and tyrosine 139 each coordinate phylloquinone. A (S)-warfarin-binding site is contributed by tyrosine 139. At 154-161 the chain is on the cytoplasmic side; that stretch reads PEHKVKKP.

It belongs to the VKOR family. Highly expressed in liver. Detected at lower levels in lung, kidney and testis.

The protein localises to the endoplasmic reticulum membrane. The enzyme catalyses phylloquinone + [protein]-disulfide + H2O = 2,3-epoxyphylloquinone + [protein]-dithiol. The catalysed reaction is phylloquinol + [protein]-disulfide = phylloquinone + [protein]-dithiol. Its activity is regulated as follows. Inhibited by warfarin (coumadin). Warfarin locks VKORC1 in both redox states into the closed conformation. Functionally, involved in vitamin K metabolism. Catalytic subunit of the vitamin K epoxide reductase (VKOR) complex which reduces inactive vitamin K 2,3-epoxide to active vitamin K. Vitamin K is required for the gamma-carboxylation of various proteins, including clotting factors, and is required for normal blood coagulation, but also for normal bone development. This is Vitamin K epoxide reductase complex subunit 1 (Vkorc1) from Rattus norvegicus (Rat).